The primary structure comprises 198 residues: DnaJ homolog subfamily C member 12 (198 aa).

The residue at position 1 (methionine 1) is an N-acetylmethionine. A J domain is found at 14–79; sequence DYYTLLGCDE…ASRARYDHWR (66 aa). The disordered stretch occupies residues 112–167; that stretch reads MLEESDQTPTDKIENEEQDEQKEIKKEEFGSTTEKMEQKESKSVEKSFSPQNPDSP. Over residues 120 to 156 the composition is skewed to basic and acidic residues; it reads PTDKIENEEQDEQKEIKKEEFGSTTEKMEQKESKSVE. Residues serine 160, serine 166, and serine 182 each carry the phosphoserine modification.

In terms of assembly, interacts with HSPA8. Interacts with TPH1. Interacts with TPH2.

The protein resides in the cytoplasm. Functionally, probable co-chaperone that participates in the proper folding of biopterin-dependent aromatic amino acid hydroxylases, which include phenylalanine-4-hydroxylase (PAH), tyrosine 3-monooxygenase (TH) and peripheral and neuronal tryptophan hydroxylases (TPH1 and TPH2). The polypeptide is DnaJ homolog subfamily C member 12 (DNAJC12) (Bos taurus (Bovine)).